Here is a 238-residue protein sequence, read N- to C-terminus: Response regulator receiver protein Anae109_2439 (238 aa).

2 Response regulatory domains span residues 3–117 and 121–228; these read RYLI…AAAR and LVAV…ERLH. 4-aspartylphosphate is present on residues D52 and D169.

In terms of processing, is diphosphorylated by GchK.

Its function is as follows. Member of the two-component regulatory system GcHK/Anae109_2439. Is involved in a signal transduction system responding to oxygen availability. The polypeptide is Response regulator receiver protein Anae109_2439 (Anaeromyxobacter sp. (strain Fw109-5)).